Reading from the N-terminus, the 376-residue chain is N-acetyldiaminopimelate deacetylase (376 aa).

The active site involves aspartate 70. Catalysis depends on glutamate 129, which acts as the Proton acceptor.

It belongs to the peptidase M20A family. N-acetyldiaminopimelate deacetylase subfamily.

The catalysed reaction is N-acetyl-(2S,6S)-2,6-diaminopimelate + H2O = (2S,6S)-2,6-diaminopimelate + acetate. It participates in amino-acid biosynthesis; L-lysine biosynthesis via DAP pathway; LL-2,6-diaminopimelate from (S)-tetrahydrodipicolinate (acetylase route): step 3/3. In terms of biological role, catalyzes the conversion of N-acetyl-diaminopimelate to diaminopimelate and acetate. This chain is N-acetyldiaminopimelate deacetylase, found in Bacillus pumilus (strain SAFR-032).